Consider the following 447-residue polypeptide: C4-dicarboxylate transport protein 3 (447 aa).

Transmembrane regions (helical) follow at residues 5-27, 42-64, 77-99, 146-165, 186-208, 223-245, 315-337, and 352-374; these read TLGK…GVAA, IKLI…IARM, ALVY…VNLV, LARN…GIAL, VFSI…MAFT, LMAT…VARL, IFVA…LGVL, and FITL…VLLL.

This sequence belongs to the dicarboxylate/amino acid:cation symporter (DAACS) (TC 2.A.23) family.

The protein localises to the cell inner membrane. Responsible for the transport of dicarboxylates such as succinate, fumarate, and malate from the periplasm across the membrane. This chain is C4-dicarboxylate transport protein 3 (dctA3), found in Ralstonia nicotianae (strain ATCC BAA-1114 / GMI1000) (Ralstonia solanacearum).